The chain runs to 303 residues: MALSFSAILHIIMMSAEFFTGITVNGFLIIVNCNELIKHRKLMPIQILLMCIGMSRFGLQMVLMVQSFFSVFFPLLYVKIIYGAAMMFLWMFFSSISLWFATCLSVFYCLKISGFTQSCFLWLKFRIPKLIPWLLLGSVLASVSIASVCIEVDYAKNVEEDALRNTTLKKSKTKIKKISEVLLVNLALIFPLAIFVMCTSMLLISLYKHTHRMQHGSHGFRNANTEAHINALKTVITFFCFFISYFAAFMTNMTFSLPYRSHQFFMLKDIMAAYPSGHSVIIILSNSKFQQSFRRILCLKKKL.

The Extracellular portion of the chain corresponds to 1–10; that stretch reads MALSFSAILH. A helical membrane pass occupies residues 11 to 31; it reads IIMMSAEFFTGITVNGFLIIV. Residues 32–56 lie on the Cytoplasmic side of the membrane; that stretch reads NCNELIKHRKLMPIQILLMCIGMSR. The helical transmembrane segment at 57-77 threads the bilayer; the sequence is FGLQMVLMVQSFFSVFFPLLY. Residues 78–79 lie on the Extracellular side of the membrane; it reads VK. Residues 80–100 traverse the membrane as a helical segment; that stretch reads IIYGAAMMFLWMFFSSISLWF. At 101–102 the chain is on the cytoplasmic side; that stretch reads AT. A helical membrane pass occupies residues 103–123; the sequence is CLSVFYCLKISGFTQSCFLWL. The Extracellular segment spans residues 124 to 129; the sequence is KFRIPK. Residues 130–150 traverse the membrane as a helical segment; it reads LIPWLLLGSVLASVSIASVCI. The Cytoplasmic portion of the chain corresponds to 151–185; that stretch reads EVDYAKNVEEDALRNTTLKKSKTKIKKISEVLLVN. The chain crosses the membrane as a helical span at residues 186-206; that stretch reads LALIFPLAIFVMCTSMLLISL. Residues 207 to 234 are Extracellular-facing; sequence YKHTHRMQHGSHGFRNANTEAHINALKT. The helical transmembrane segment at 235-255 threads the bilayer; that stretch reads VITFFCFFISYFAAFMTNMTF. Residues 256–277 are Cytoplasmic-facing; it reads SLPYRSHQFFMLKDIMAAYPSG.

The protein belongs to the G-protein coupled receptor T2R family.

It localises to the cell membrane. Bitter taste receptor that detects natural and synthetic bitter compounds. This is Taste receptor type 2 member 2 from Homo sapiens (Human).